A 508-amino-acid chain; its full sequence is MASGAVADHQIEAVSGKRVAVVGAGVSGLAAAYKLKSRGLNVTVFEADGRVGGKLRSVMQNGLIWDEGANTMTEAEPEVGSLLDDLGLREKQQFPISQKKRYIVRNGVPVMLPTNPIELVTSSVLSTQSKFQILLEPFLWKKKSSKVSDASAEESVSEFFQRHFGQEVVDYLIDPFVGGTSAADPDSLSMKHSFPDLWNVEKSFGSIIVGAIRTKFAAKGGKSRDTKSSPGTKKGSRGSFSFKGGMQILPDTLCKSLSHDEINLDSKVLSLSYNSGSRQENWSLSCVSHNETQRQNPHYDAVIMTAPLCNVKEMKVMKGGQPFQLNFLPEINYMPLSVLITTFTKEKVKRPLEGFGVLIPSKEQKHGFKTLGTLFSSMMFPDRSPSDVHLYTTFIGGSRNQELAKASTDELKQVVTSDLQRLLGVEGEPVSVNHYYWRKAFPLYDSSYDSVMEAIDKMENDLPGFFYAGNHRGGLSVGKSIASGCKAADLVISYLESCSNDKKPNDSL.

The N-terminal 22 residues, 1 to 22 (MASGAVADHQIEAVSGKRVAVV), are a transit peptide targeting the chloroplast and mitochondrion. FAD-binding positions include 23 to 28 (GAGVSG), 46 to 47 (EA), and 68 to 71 (GANT). The tract at residues 219 to 239 (KGGKSRDTKSSPGTKKGSRGS) is disordered. FAD is bound by residues Val268 and 475–477 (LSV).

It belongs to the protoporphyrinogen/coproporphyrinogen oxidase family. Protoporphyrinogen oxidase subfamily. FAD is required as a cofactor.

It localises to the plastid. It is found in the chloroplast. The protein localises to the mitochondrion. The catalysed reaction is protoporphyrinogen IX + 3 O2 = protoporphyrin IX + 3 H2O2. Its pathway is porphyrin-containing compound metabolism; protoporphyrin-IX biosynthesis; protoporphyrin-IX from protoporphyrinogen-IX: step 1/1. It participates in porphyrin-containing compound metabolism; chlorophyll biosynthesis. Its function is as follows. Catalyzes the 6-electron oxidation of protoporphyrinogen-IX to form protoporphyrin-IX. The chain is Protoporphyrinogen oxidase 2, chloroplastic/mitochondrial (PPOX2) from Arabidopsis thaliana (Mouse-ear cress).